Consider the following 541-residue polypeptide: Chaperonin GroEL 2 (541 aa).

Residues 29-32, 86-90, G413, 476-478, and D492 each bind ATP; these read TLGP, DGTTT, and NAA.

This sequence belongs to the chaperonin (HSP60) family. Forms a cylinder of 14 subunits composed of two heptameric rings stacked back-to-back. Interacts with the co-chaperonin GroES.

The protein resides in the secreted. The protein localises to the capsule. It is found in the cell surface. It localises to the cell wall. The enzyme catalyses ATP + H2O + a folded polypeptide = ADP + phosphate + an unfolded polypeptide.. Its function is as follows. Together with its co-chaperonin GroES, plays an essential role in assisting protein folding. The GroEL-GroES system forms a nano-cage that allows encapsulation of the non-native substrate proteins and provides a physical environment optimized to promote and accelerate protein folding. This chain is Chaperonin GroEL 2, found in Mycolicibacterium gilvum (strain PYR-GCK) (Mycobacterium gilvum (strain PYR-GCK)).